Reading from the N-terminus, the 286-residue chain is Probable aquaporin-3 (286 aa).

A disordered region spans residues 1–34; that stretch reads MADTYGMNGHNGHVKDRRSSSMNGRNRLYAQQEP. The Cytoplasmic segment spans residues 1-52; the sequence is MADTYGMNGHNGHVKDRRSSSMNGRNRLYAQQEPQRTTHLSEFGKHMVAASG. A helical transmembrane segment spans residues 53–73; the sequence is EFVGTFLFLYFGYAGNIVAVL. Over 74–87 the chain is Extracellular; it reads QEPISGPNGTLANN. N-linked (GlcNAc...) asparagine glycosylation is found at Asn81 and Asn86. The chain crosses the membrane as a helical span at residues 88–108; the sequence is TVMYIAMAYGFSLLVNVWTFY. Topologically, residues 109 to 135 are cytoplasmic; the sequence is RISGGLFNPAVTFGLCLSGQLPWIRAL. An NPA 1 motif is present at residues 116–118; that stretch reads NPA. A helical membrane pass occupies residues 136 to 156; the sequence is FLFPSQIIAAMCAGGLVNAMF. Residues 157–175 lie on the Extracellular side of the membrane; it reads PGSASIANTTLGPNTSIAQ. Asn164 and Asn170 each carry an N-linked (GlcNAc...) asparagine glycan. Residues 176 to 196 form a helical membrane-spanning segment; that stretch reads GVFLEMFFTAQLVFVVLMLAA. The Cytoplasmic portion of the chain corresponds to 197–202; it reads EKSRDT. Residues 203–223 traverse the membrane as a helical segment; that stretch reads FLAPVGIGLALFVALIPGVFV. Over 224–244 the chain is Extracellular; sequence TGGSANPVRSFGCAVGSRDFP. The NPA 2 motif lies at 229–231; that stretch reads NPV. Residues 245–265 traverse the membrane as a helical segment; the sequence is GYHWIYWVGPLLGAALAAGYF. Over 266–286 the chain is Cytoplasmic; sequence RLVKMMHYEEANPGQDSPVDV.

It belongs to the MIP/aquaporin (TC 1.A.8) family.

The protein localises to the membrane. It carries out the reaction H2O(in) = H2O(out). Functionally, probable water channel that may have redundant functions with FgAQP5. The chain is Probable aquaporin-3 from Gibberella zeae (strain ATCC MYA-4620 / CBS 123657 / FGSC 9075 / NRRL 31084 / PH-1) (Wheat head blight fungus).